The chain runs to 410 residues: Metacaspase-1 (410 aa).

A disordered region spans residues 1-94 (MFPGSGRQTY…RQSGAMNDVS (94 aa)). Composition is skewed to low complexity over residues 21-47 (APQY…YNGP) and 55-64 (NYNYGHYGPP). A compositionally biased stretch (gly residues) spans 65-75 (QGQGQGYGQGG). Polar residues predominate over residues 80-94 (MYNNNRQSGAMNDVS). Active-site residues include H200 and C256.

It belongs to the peptidase C14B family.

Involved in cell death (apoptosis). The polypeptide is Metacaspase-1 (MCA1) (Meyerozyma guilliermondii (strain ATCC 6260 / CBS 566 / DSM 6381 / JCM 1539 / NBRC 10279 / NRRL Y-324) (Yeast)).